We begin with the raw amino-acid sequence, 360 residues long: Spore germination protein GerQB (360 aa).

10 consecutive transmembrane segments (helical) span residues 11-31 (SPYM…MLGF), 45-65 (ISTL…YQIL), 84-104 (IGGL…ATTL), 116-136 (FPSI…YYIV), 142-162 (VVAG…FTFF), 188-208 (MKGN…YPFI), 220-240 (YANL…LAFF), 270-290 (IIVS…LWGV), 300-320 (IKQK…SFFL), and 331-351 (TWTG…LWLI).

It belongs to the amino acid-polyamine-organocation (APC) superfamily. Spore germination protein (SGP) (TC 2.A.3.9) family.

The protein resides in the membrane. Required for the germination response to inosine. Has no role in L-alanine germination. The protein is Spore germination protein GerQB (gerQB) of Bacillus cereus.